A 41-amino-acid polypeptide reads, in one-letter code: Photosystem I reaction center subunit IX (41 aa).

Residues Y7–I27 traverse the membrane as a helical segment.

Belongs to the PsaJ family.

Its subcellular location is the plastid. The protein localises to the chloroplast thylakoid membrane. In terms of biological role, may help in the organization of the PsaE and PsaF subunits. The chain is Photosystem I reaction center subunit IX from Trieres chinensis (Marine centric diatom).